We begin with the raw amino-acid sequence, 687 residues long: Phage-like element PBSX protein XkdV (687 aa).

The protein to B.subtilis YqcC.

The protein is Phage-like element PBSX protein XkdV (xkdV) of Bacillus subtilis (strain 168).